The following is a 312-amino-acid chain: Protoheme IX farnesyltransferase (312 aa).

Residues 1–36 (MNKSNTAIDPTNVIEAGPDSSVADVQQKSWKDYLVL) are Cytoplasmic-facing. The chain crosses the membrane as a helical span at residues 37 to 55 (AKQGIVTSNLITTFAGIYL). At 56–69 (AIVYTGTVFTMHLD) the chain is on the extracellular side. A helical membrane pass occupies residues 70-88 (TMIFALLGAALVMAGGCTL). Residues 89–110 (NNYIDRDIDHLMERTKERPTVT) lie on the Cytoplasmic side of the membrane. A helical membrane pass occupies residues 111-129 (GRFSAKHVLLVGLAQAALG). Over 130-138 (IIFLALTTP) the chain is Extracellular. Residues 139-157 (TAAVIGLIGLFIYVVLYTM) traverse the membrane as a helical segment. The Cytoplasmic portion of the chain corresponds to 158-228 (WTKRTTTLNT…YRAAGIPMLP (71 aa)). The chain crosses the membrane as a helical span at residues 229–247 (VVAGFEMTKRQMVVYVAAL). Over 248–259 (LPVSLMLYPFGL) the chain is Extracellular. The chain crosses the membrane as a helical span at residues 260–275 (VYTIVAAVLGVGWLAL). Over 276–296 (GIAGFKMKDDIKWARLMFVYS) the chain is Cytoplasmic. The helical transmembrane segment at 297–307 (LNYLTILFVLM) threads the bilayer. At 308 to 312 (VIVHF) the chain is on the extracellular side.

Belongs to the UbiA prenyltransferase family.

It localises to the cell membrane. It catalyses the reaction heme b + (2E,6E)-farnesyl diphosphate + H2O = Fe(II)-heme o + diphosphate. It functions in the pathway porphyrin-containing compound metabolism; heme O biosynthesis; heme O from protoheme: step 1/1. In terms of biological role, converts protoheme IX and farnesyl diphosphate to heme O. The polypeptide is Protoheme IX farnesyltransferase (ctaB) (Alkalihalophilus pseudofirmus (strain ATCC BAA-2126 / JCM 17055 / OF4) (Bacillus pseudofirmus)).